The following is a 120-amino-acid chain: UPF0145 protein UNCMA_30400 (120 aa).

This sequence belongs to the UPF0145 family.

The sequence is that of UPF0145 protein UNCMA_30400 from Methanocella arvoryzae (strain DSM 22066 / NBRC 105507 / MRE50).